A 225-amino-acid polypeptide reads, in one-letter code: Orotate phosphoribosyltransferase (225 aa).

Residue Lys-32 coordinates 5-phospho-alpha-D-ribose 1-diphosphate. 40–41 is a binding site for orotate; sequence FF. 5-phospho-alpha-D-ribose 1-diphosphate contacts are provided by residues 78 to 79, Arg-104, Lys-105, Lys-108, His-110, and 129 to 137; these read YK and DDVISAGTS. Orotate contacts are provided by Ser-133 and Arg-161.

This sequence belongs to the purine/pyrimidine phosphoribosyltransferase family. PyrE subfamily. Homodimer. Mg(2+) is required as a cofactor.

The catalysed reaction is orotidine 5'-phosphate + diphosphate = orotate + 5-phospho-alpha-D-ribose 1-diphosphate. It functions in the pathway pyrimidine metabolism; UMP biosynthesis via de novo pathway; UMP from orotate: step 1/2. Functionally, catalyzes the transfer of a ribosyl phosphate group from 5-phosphoribose 1-diphosphate to orotate, leading to the formation of orotidine monophosphate (OMP). In Cupriavidus metallidurans (strain ATCC 43123 / DSM 2839 / NBRC 102507 / CH34) (Ralstonia metallidurans), this protein is Orotate phosphoribosyltransferase.